The chain runs to 1207 residues: DNA-directed RNA polymerase subunit beta' (1207 aa).

Zn(2+) is bound by residues cysteine 60, cysteine 62, cysteine 75, and cysteine 78. 3 residues coordinate Mg(2+): aspartate 450, aspartate 452, and aspartate 454. Residues cysteine 819, cysteine 893, cysteine 900, and cysteine 903 each contribute to the Zn(2+) site.

This sequence belongs to the RNA polymerase beta' chain family. As to quaternary structure, the RNAP catalytic core consists of 2 alpha, 1 beta, 1 beta' and 1 omega subunit. When a sigma factor is associated with the core the holoenzyme is formed, which can initiate transcription. The cofactor is Mg(2+). It depends on Zn(2+) as a cofactor.

The enzyme catalyses RNA(n) + a ribonucleoside 5'-triphosphate = RNA(n+1) + diphosphate. Its function is as follows. DNA-dependent RNA polymerase catalyzes the transcription of DNA into RNA using the four ribonucleoside triphosphates as substrates. This chain is DNA-directed RNA polymerase subunit beta', found in Streptococcus pyogenes serotype M12 (strain MGAS2096).